A 653-amino-acid polypeptide reads, in one-letter code: Sulfate transporter 1.2 (653 aa).

The disordered stretch occupies residues 1–30; sequence MSSRAHPVDGSPATDGGHVPMKPSPTRHKV. Topologically, residues 1–91 are cytoplasmic; that stretch reads MSSRAHPVDG…GRNYTFKKFR (91 aa). Residues 92 to 112 form a helical membrane-spanning segment; it reads GDLISGLTIASLCIPQDIGYA. The Extracellular portion of the chain corresponds to 113 to 116; the sequence is KLAN. A helical membrane pass occupies residues 117–137; that stretch reads LDPKYGLYSSFVPPLVYACMG. Over 138-141 the chain is Cytoplasmic; that stretch reads SSRD. A helical transmembrane segment spans residues 142-162; that stretch reads IAIGPVAVVSLLLGTLLRAEI. The Extracellular portion of the chain corresponds to 163–173; the sequence is DPNTSPDEYLR. Transmembrane regions (helical) follow at residues 174–194 and 195–215; these read LAFTATFFAGITEAALGFFRL and GFLIDFLSHAAVVGFMGGAAI. The Extracellular segment spans residues 216–253; that stretch reads TIALQQLKGFLGIKKFTKKTDIISVLESVFKAAHHGWN. Residues 254–274 form a helical membrane-spanning segment; the sequence is WQTILIGASFLTFLLTSKIIG. The Cytoplasmic segment spans residues 275 to 280; that stretch reads KKSKKL. A helical transmembrane segment spans residues 281–301; it reads FWVPAIAPLISVIVSTFFVYI. The Extracellular portion of the chain corresponds to 302–339; the sequence is TRADKQGVQIVKHLDQGINPSSFHLIYFTGDNLAKGIR. Residues 340-360 form a helical membrane-spanning segment; sequence IGVVAGMVALTEAVAIGRTFA. The Cytoplasmic segment spans residues 361–372; that stretch reads AMKDYQIDGNKE. A helical membrane pass occupies residues 373-393; the sequence is MVALGMMNVVGSMSSCYVATG. Residues 394–409 are Extracellular-facing; the sequence is SFSRSAVNFMAGCQTA. Residues 410-430 form a helical membrane-spanning segment; the sequence is VSNIIMSIVVLLTLLFLTPLF. Topologically, residues 431–438 are cytoplasmic; that stretch reads KYTPNAIL. Residues 439-459 traverse the membrane as a helical segment; that stretch reads AAIIINAVIPLIDIQAAILIF. Residues 460–466 lie on the Extracellular side of the membrane; that stretch reads KVDKLDF. Residues 467–487 traverse the membrane as a helical segment; that stretch reads IACIGAFFGVIFVSVEIGLLI. At 488 to 653 the chain is on the cytoplasmic side; that stretch reads AVSISFAKIL…ACCPKLSNEV (166 aa). Residues 522–645 enclose the STAS domain; sequence QYPEATMVPG…LTVADAVEAC (124 aa).

Belongs to the SLC26A/SulP transporter (TC 2.A.53.1) family. In terms of assembly, homodimer. Interacts with OASA1 through its STAS domain. In terms of tissue distribution, expressed in lateral root cap, root hairs, epidermal and cortical cells of roots.

It is found in the cell membrane. With respect to regulation, interaction with OASA1 negatively impacts the transporter activity. Its function is as follows. High-affinity H(+)/sulfate cotransporter that mediates the uptake of the environmental sulfate by plant roots. Plays a central role in the regulation of sulfate assimilation. Unable to transport molybdate. This chain is Sulfate transporter 1.2 (SULTR1;2), found in Arabidopsis thaliana (Mouse-ear cress).